A 395-amino-acid chain; its full sequence is Serine-type anaerobic sulfatase-maturating enzyme (395 aa).

The Radical SAM core domain occupies 18–249 (PRSPVPFHIL…QWRKRCDRGR (232 aa)). [4Fe-4S] cluster is bound by residues Cys-35 and Cys-39. Residue Tyr-41 coordinates S-adenosyl-L-methionine. Cys-42 provides a ligand contact to [4Fe-4S] cluster. Residues Gly-84 and Arg-152 each contribute to the S-adenosyl-L-methionine site. [4Fe-4S] cluster is bound by residues Cys-270, Cys-276, and Cys-291. Residue Asp-292 is the Proton acceptor of the active site. [4Fe-4S] cluster contacts are provided by Cys-331, Cys-334, Cys-340, Cys-344, and Cys-357.

This sequence belongs to the radical SAM superfamily. Anaerobic sulfatase-maturating enzyme family. Monomer. Interacts with AtsA prior to its export to the periplasm. This interaction depends on the presence of AtsA 'Ser-72'. Binding of SAM to AtsB promotes the formation of a ternary AtsA-AtsB-SAM complex. The cofactor is [4Fe-4S] cluster.

Its subcellular location is the cytoplasm. The enzyme catalyses L-seryl-[sulfatase] + S-adenosyl-L-methionine = 3-oxo-L-alanyl-[sulfatase] + 5'-deoxyadenosine + L-methionine + H(+). It participates in protein modification; sulfatase oxidation. Its activity is regulated as follows. Activity is inhibited by iron chelators. Its function is as follows. Involved in 'Ser-type' sulfatase maturation under anaerobic conditions. Catalyzes the post-translational modification of serine ('Ser-72' in the arylsulfatase AtsA) into 3-oxoalanine (also known as C(alpha)-formylglycine (FGly)), by a free radical chemical mechanism initiated via the reductive cleavage of S-adenosyl-L-methionine (SAM). Is capable of catalyzing multiple turnovers. In vitro, use of a peptide substrate in which the target serine is changed to cysteine also gives rise to turnover, supporting approximately 4-fold the activity of that observed with the natural substrate. The sequence is that of Serine-type anaerobic sulfatase-maturating enzyme from Klebsiella pneumoniae.